A 160-amino-acid chain; its full sequence is Putative UPF0479 protein YIL177W-A (160 aa).

Transmembrane regions (helical) follow at residues 39–59 and 136–156; these read IVFC…KVLQ and VPMI…ISQH.

Belongs to the UPF0479 family.

It localises to the membrane. The sequence is that of Putative UPF0479 protein YIL177W-A from Saccharomyces cerevisiae (strain ATCC 204508 / S288c) (Baker's yeast).